A 142-amino-acid polypeptide reads, in one-letter code: Large ribosomal subunit protein uL13 (142 aa).

Belongs to the universal ribosomal protein uL13 family. As to quaternary structure, part of the 50S ribosomal subunit.

Its function is as follows. This protein is one of the early assembly proteins of the 50S ribosomal subunit, although it is not seen to bind rRNA by itself. It is important during the early stages of 50S assembly. The sequence is that of Large ribosomal subunit protein uL13 from Pseudomonas paraeruginosa (strain DSM 24068 / PA7) (Pseudomonas aeruginosa (strain PA7)).